Consider the following 62-residue polypeptide: Large ribosomal subunit protein uL29 (62 aa).

It belongs to the universal ribosomal protein uL29 family.

In Enterococcus faecalis (strain ATCC 700802 / V583), this protein is Large ribosomal subunit protein uL29.